Consider the following 303-residue polypeptide: Nucleotide-binding protein Acry_0446 (303 aa).

Glycine 10 to asparagine 17 provides a ligand contact to ATP. A GTP-binding site is contributed by aspartate 54–threonine 57.

This sequence belongs to the RapZ-like family.

Its function is as follows. Displays ATPase and GTPase activities. The polypeptide is Nucleotide-binding protein Acry_0446 (Acidiphilium cryptum (strain JF-5)).